The primary structure comprises 503 residues: Cytochrome P450 3A12 (503 aa).

Cysteine 442 is a heme binding site.

Belongs to the cytochrome P450 family. The cofactor is heme.

Its subcellular location is the endoplasmic reticulum membrane. The protein resides in the microsome membrane. It carries out the reaction an organic molecule + reduced [NADPH--hemoprotein reductase] + O2 = an alcohol + oxidized [NADPH--hemoprotein reductase] + H2O + H(+). Its function is as follows. Cytochromes P450 are a group of heme-thiolate monooxygenases. In liver microsomes, this enzyme is involved in an NADPH-dependent electron transport pathway. It oxidizes a variety of structurally unrelated compounds, including steroids, fatty acids, and xenobiotics. The sequence is that of Cytochrome P450 3A12 (CYP3A12) from Canis lupus familiaris (Dog).